The primary structure comprises 858 residues: Leucine--tRNA ligase (858 aa).

A 'HIGH' region motif is present at residues proline 42–histidine 52. A 'KMSKS' region motif is present at residues lysine 618–serine 622. Residue lysine 621 participates in ATP binding.

The protein belongs to the class-I aminoacyl-tRNA synthetase family.

The protein resides in the cytoplasm. It catalyses the reaction tRNA(Leu) + L-leucine + ATP = L-leucyl-tRNA(Leu) + AMP + diphosphate. In Vibrio atlanticus (strain LGP32) (Vibrio splendidus (strain Mel32)), this protein is Leucine--tRNA ligase.